The following is a 113-amino-acid chain: Cytochrome c55X (113 aa).

The signal sequence occupies residues 1–26; the sequence is MTVARHAVSRLGLALASFLLFPLALA. Heme c-binding residues include Cys45, Cys48, and His49.

Binds 1 heme c group covalently per subunit.

Its subcellular location is the periplasm. Its function is as follows. Monoheme c-type cytochrome. This Stutzerimonas stutzeri (Pseudomonas stutzeri) protein is Cytochrome c55X (nirC).